A 371-amino-acid polypeptide reads, in one-letter code: Transaldolase (371 aa).

Catalysis depends on lysine 140, which acts as the Schiff-base intermediate with substrate.

This sequence belongs to the transaldolase family. Type 2 subfamily.

The protein resides in the cytoplasm. The enzyme catalyses D-sedoheptulose 7-phosphate + D-glyceraldehyde 3-phosphate = D-erythrose 4-phosphate + beta-D-fructose 6-phosphate. It participates in carbohydrate degradation; pentose phosphate pathway; D-glyceraldehyde 3-phosphate and beta-D-fructose 6-phosphate from D-ribose 5-phosphate and D-xylulose 5-phosphate (non-oxidative stage): step 2/3. In terms of biological role, transaldolase is important for the balance of metabolites in the pentose-phosphate pathway. The sequence is that of Transaldolase from Frankia alni (strain DSM 45986 / CECT 9034 / ACN14a).